We begin with the raw amino-acid sequence, 700 residues long: Polyribonucleotide nucleotidyltransferase (700 aa).

Residues Asp-487 and Asp-493 each coordinate Mg(2+). The KH domain occupies 554–613; it reads PRLLTIKIHPDKIRDVIGKGGSTIQAITKDTGTQIDIQDDGTIVIASVNNAAAREAKRRI. Positions 623 to 691 constitute an S1 motif domain; sequence GRIYEGKVAK…KQGRIRLSIK (69 aa).

Belongs to the polyribonucleotide nucleotidyltransferase family. In terms of assembly, component of the RNA degradosome, which is a multiprotein complex involved in RNA processing and mRNA degradation. Mg(2+) serves as cofactor.

The protein resides in the cytoplasm. The catalysed reaction is RNA(n+1) + phosphate = RNA(n) + a ribonucleoside 5'-diphosphate. Functionally, involved in mRNA degradation. Catalyzes the phosphorolysis of single-stranded polyribonucleotides processively in the 3'- to 5'-direction. The chain is Polyribonucleotide nucleotidyltransferase from Xylella fastidiosa (strain M12).